The chain runs to 279 residues: Protein phosphatase 1 regulatory subunit 3E (279 aa).

2 positions are modified to phosphoserine: Ser16 and Ser33. Residues 28–87 (RSQRPSLEEESEEEPGEGGTRPGARSRAHVPGRGRRARSAPAGGGGARTARSRSPDTRKR) form a disordered region. Positions 51-65 (ARSRAHVPGRGRRAR) are enriched in basic residues. Phosphoserine is present on Ser66. The PP1-binding motif signature appears at 87-90 (RVRF). Residues 154–259 (AARLQAQRIC…NNGGRDYALL (106 aa)) form the CBM21 domain. Positions 176 to 198 (GSARVLDLAYEKRVSVRWSADGW) are glycogen-binding motif. The segment at 248–256 (WDNNGGRDY) is substrate-binding motif.

Its function is as follows. Acts as a glycogen-targeting subunit for PP1. PP1 is involved in glycogen metabolism and contributes to the activation of glycogen synthase leading to an increase in glycogen synthesis. The sequence is that of Protein phosphatase 1 regulatory subunit 3E (Ppp1r3e) from Mus musculus (Mouse).